An 80-amino-acid polypeptide reads, in one-letter code: Small ribosomal subunit protein bS16c (80 aa).

Belongs to the bacterial ribosomal protein bS16 family.

The protein localises to the plastid. It is found in the chloroplast. This Lotus japonicus (Lotus corniculatus var. japonicus) protein is Small ribosomal subunit protein bS16c.